The following is a 61-amino-acid chain: Putative antitoxin PYRAB11980 (61 aa).

Belongs to the UPF0165 family.

In terms of biological role, possibly the antitoxin component of a type II toxin-antitoxin (TA) system. This Pyrococcus abyssi (strain GE5 / Orsay) protein is Putative antitoxin PYRAB11980.